The primary structure comprises 156 residues: Snaclec subunit B (156 aa).

The first 23 residues, 1 to 23, serve as a signal peptide directing secretion; that stretch reads MGRSIFVNLGLLVVAFSLRGSEA. Disulfide bonds link Cys-25-Cys-36, Cys-53-Cys-144, and Cys-119-Cys-136. The 114-residue stretch at 32 to 145 folds into the C-type lectin domain; that stretch reads YDKYCYKVFD…CKSTLPFTCK (114 aa).

The protein belongs to the snaclec family. In terms of assembly, heterodimer of subunits A and B; disulfide-linked. In terms of tissue distribution, expressed by the venom gland.

It is found in the secreted. Its function is as follows. Interferes with one step of hemostasis (modulation of platelet aggregation, or coagulation cascade, for example). This is Snaclec subunit B from Philodryas olfersii (Green snake).